A 389-amino-acid chain; its full sequence is Oxysterol-binding protein 1 (389 aa).

2 coiled-coil regions span residues 1 to 31 (MGKK…NKPA) and 340 to 371 (KDDV…DEWK). Residues 1 to 43 (MGKKDKNVSVEEEVDEAEIEKLAAENANKPAPQLTKEDLDAMD) form a disordered region.

The protein belongs to the OSBP family. In terms of assembly, interacts with dstC.

It localises to the cytoplasm. Its function is as follows. May play a role in the regulation of the slug-fruiting body switch. This chain is Oxysterol-binding protein 1 (osbA), found in Dictyostelium discoideum (Social amoeba).